The following is a 252-amino-acid chain: 5'-nucleotidase SurE (252 aa).

4 residues coordinate a divalent metal cation: Asp8, Asp9, Ser39, and Asn91.

Belongs to the SurE nucleotidase family. It depends on a divalent metal cation as a cofactor.

The protein resides in the cytoplasm. The enzyme catalyses a ribonucleoside 5'-phosphate + H2O = a ribonucleoside + phosphate. Its function is as follows. Nucleotidase that shows phosphatase activity on nucleoside 5'-monophosphates. In Bordetella petrii (strain ATCC BAA-461 / DSM 12804 / CCUG 43448), this protein is 5'-nucleotidase SurE.